Consider the following 453-residue polypeptide: Sensor histidine kinase CpxA (453 aa).

The Cytoplasmic portion of the chain corresponds to 1–4 (MTAR). The helical transmembrane segment at 5-25 (IFAIFWLTLALVLMLVLMLPK) threads the bilayer. Over 26–159 (LDSRQMTELL…SDFINLLFDR (134 aa)) the chain is Periplasmic. A helical transmembrane segment spans residues 160–180 (PLLLLIVTMLVSAPLLLWLAW). The HAMP domain occupies 180–233 (WSLAKPARKLKNAADEVAQGNLRQHPELEAGPQEFLAAGASFNQMVTALERMMT). At 181 to 453 (SLAKPARKLK…TIWLPLYKRT (273 aa)) the chain is on the cytoplasmic side. Residues 241–451 (DISHELRTPL…RLTIWLPLYK (211 aa)) enclose the Histidine kinase domain. The Nucleophile role is filled by histidine 244. At histidine 244 the chain carries Phosphohistidine; by autocatalysis. ATP contacts are provided by residues 244-247 (HELR), 355-360 (RNALRY), aspartate 382, 401-402 (RT), and 412-417 (GTGLGL).

As to quaternary structure, interacts with cognate response regulator CpxR.

The protein resides in the cell inner membrane. It catalyses the reaction ATP + protein L-histidine = ADP + protein N-phospho-L-histidine.. Its activity is regulated as follows. The two-component system is activated by envelope stress such as overexpression of some (misfolded) periplasmic proteins. Functionally, histidine kinase member of the two-component regulatory system CpxA/CpxR which responds to envelope stress response by activating or, in some cases, repressing expression of downstream genes. Activates CpxR by phosphorylation. The protein is Sensor histidine kinase CpxA of Klebsiella pneumoniae subsp. pneumoniae (strain HS11286).